The primary structure comprises 325 residues: NAD kinase (325 aa).

Asp-91 acts as the Proton acceptor in catalysis. NAD(+)-binding positions include 91–92 (DG), His-96, 165–166 (ND), His-176, His-193, Asp-195, and 206–211 (TAYALS).

It belongs to the NAD kinase family. A divalent metal cation serves as cofactor.

It localises to the cytoplasm. The catalysed reaction is NAD(+) + ATP = ADP + NADP(+) + H(+). In terms of biological role, involved in the regulation of the intracellular balance of NAD and NADP, and is a key enzyme in the biosynthesis of NADP. Catalyzes specifically the phosphorylation on 2'-hydroxyl of the adenosine moiety of NAD to yield NADP. The chain is NAD kinase from Psychrobacter arcticus (strain DSM 17307 / VKM B-2377 / 273-4).